A 234-amino-acid chain; its full sequence is Adenosine 5'-phosphosulfate reductase (234 aa).

The [4Fe-4S] cluster site is built by C120, C121, C203, and C206. The active-site Nucleophile; cysteine thiosulfonate intermediate is C229.

It belongs to the PAPS reductase family. CysH subfamily. It depends on [4Fe-4S] cluster as a cofactor.

The protein resides in the cytoplasm. It catalyses the reaction [thioredoxin]-disulfide + sulfite + AMP + 2 H(+) = adenosine 5'-phosphosulfate + [thioredoxin]-dithiol. It functions in the pathway sulfur metabolism; hydrogen sulfide biosynthesis; sulfite from sulfate. Its function is as follows. Catalyzes the formation of sulfite from adenosine 5'-phosphosulfate (APS) using thioredoxin as an electron donor. This Bacillus cereus (strain ATCC 14579 / DSM 31 / CCUG 7414 / JCM 2152 / NBRC 15305 / NCIMB 9373 / NCTC 2599 / NRRL B-3711) protein is Adenosine 5'-phosphosulfate reductase.